Consider the following 335-residue polypeptide: Protein-arginine N-acetylglucosaminyltransferase SseK3 (335 aa).

Residues 51 to 53 (QWF) and Tyr-75 contribute to the UDP-N-acetyl-alpha-D-glucosamine site. Arg-153 and Arg-184 each carry an N-beta-linked (GlcNAc) arginine; by autocatalysis glycan. 224-227 (YLDA) serves as a coordination point for UDP-N-acetyl-alpha-D-glucosamine. Residues 226 to 228 (DAD) carry the DXD motif motif. A Mn(2+)-binding site is contributed by Asp-228. Catalysis depends on Glu-258, which acts as the Proton acceptor. N-beta-linked (GlcNAc) arginine; by autocatalysis glycosylation is present at Arg-305. Residues Asp-325 and Ser-327 each coordinate Mn(2+). UDP-N-acetyl-alpha-D-glucosamine-binding positions include Ser-327 and 332 to 335 (SSWR). Arg-335 is a glycosylation site (N-beta-linked (GlcNAc) arginine; by autocatalysis).

Belongs to the glycosyltransferase NleB family. Interacts with host TRIM32; without mediating its GlcNAcylation. It depends on Mn(2+) as a cofactor. Post-translationally, auto-glycosylated: arginine GlcNAcylation is required for activity toward death domain-containing host target proteins.

It is found in the secreted. The protein resides in the host Golgi apparatus. It carries out the reaction L-arginyl-[protein] + UDP-N-acetyl-alpha-D-glucosamine = N(omega)-(N-acetyl-beta-D-glucosaminyl)-L-arginyl-[protein] + UDP + H(+). In terms of biological role, protein-arginine N-acetylglucosaminyltransferase effector that disrupts TNF signaling in infected cells, including NF-kappa-B signaling and apoptosis. Acts by catalyzing the transfer of a single N-acetylglucosamine (GlcNAc) to a conserved arginine residue in the death domain of host proteins such as TRADD, TNFRSF1A/TNFR1 and TNFRSF10B/TRAILR2: arginine GlcNAcylation prevents homotypic/heterotypic death domain interactions and assembly of the oligomeric TNF-alpha receptor complex, thereby disrupting TNF signaling. Also acts on host proteins without a death domain: catalyzes arginine GlcNAcylation of host small Rab GTPase (Rab1, Rab5 and Rab11), thereby preventing GTPase activity and leading to impaired host vesicular protein transport. Also mediates auto-GlcNAcylation, which is required for activity toward death domain-containing host target proteins. In Salmonella typhimurium (strain SL1344), this protein is Protein-arginine N-acetylglucosaminyltransferase SseK3.